Here is a 126-residue protein sequence, read N- to C-terminus: Large ribosomal subunit protein bL17 (126 aa).

It belongs to the bacterial ribosomal protein bL17 family. As to quaternary structure, part of the 50S ribosomal subunit. Contacts protein L32.

The polypeptide is Large ribosomal subunit protein bL17 (Nitrosococcus oceani (strain ATCC 19707 / BCRC 17464 / JCM 30415 / NCIMB 11848 / C-107)).